A 704-amino-acid chain; its full sequence is Chloride intracellular channel protein 6 (704 aa).

Residues methionine 1 to glycine 13 show a composition bias toward low complexity. The segment at methionine 1 to alanine 446 is disordered. Residues glutamate 39–glutamate 48 are compositionally biased toward acidic residues. Serine 44 carries the phosphoserine modification. Over residues arginine 67–threonine 83 the composition is skewed to basic and acidic residues. Positions proline 90–glutamate 100 are enriched in low complexity. The segment covering proline 121–valine 147 has biased composition (basic and acidic residues). A run of 13 repeats spans residues glycine 157–leucine 166, glycine 167–alanine 176, glycine 177–valine 186, glycine 187–alanine 196, glycine 197–leucine 206, glycine 207–alanine 216, glycine 217–valine 226, glycine 227–alanine 236, glycine 237–valine 246, glycine 247–alanine 256, glycine 257–alanine 266, glycine 267–alanine 276, and glycine 277–alanine 286. A 13 X 10 AA tandem repeat of G-D-[SNG]-[VIM]-[DEQ]-A-[EAG]-[GDVE]-[PRG]-[LAVP] region spans residues glycine 157–alanine 282. Over residues glutamate 295 to proline 306 the composition is skewed to polar residues. Composition is skewed to basic and acidic residues over residues alanine 350–glycine 360 and glutamate 371–glutamate 385. Phosphoserine occurs at positions 397 and 442. A compositionally biased stretch (basic and acidic residues) spans glycine 434–alanine 446. The short motif at cysteine 487–serine 490 is the G-site element. A helical membrane pass occupies residues phenylalanine 489–valine 509. Residues tyrosine 556–lysine 704 form the GST C-terminal domain.

This sequence belongs to the chloride channel CLIC family. In terms of assembly, monomer (soluble state). Interacts with dopamine receptors DRD2, DRD3 and DRD4. In terms of processing, phosphorylated. Expressed in brain, placenta, pancreas, liver, lung, heart, kidney, liver, spleen, soleus muscle, and brown fat.

The protein localises to the cytoplasm. It is found in the cell membrane. It catalyses the reaction chloride(in) = chloride(out). Its activity is regulated as follows. Channel activity is redox- and pH-regulated. Inhibited by IAA-94. Its function is as follows. In the soluble state, catalyzes glutaredoxin-like thiol disulfide exchange reactions with reduced glutathione as electron donor. Can insert into membranes and form voltage-dependent chloride-selective channels. The channel opens upon membrane depolarization at positive voltages and closes at negative membrane voltages. May play a critical role in water-secreting cells, possibly through the regulation of chloride ion transport. This chain is Chloride intracellular channel protein 6, found in Homo sapiens (Human).